The sequence spans 348 residues: NADH-quinone oxidoreductase subunit H (348 aa).

8 helical membrane-spanning segments follow: residues 21 to 41 (IAGILLIALPVMLAVAMVIYV), 87 to 107 (GIFLLAPIVTFVVALVAWAVI), 120 to 140 (VGLLYVLAISSLGVYGIVMAG), 166 to 186 (IGFILICVVLWAGTFNLSEIV), 195 to 215 (GIVNGYFFNILLFPMWVLFFI), 258 to 278 (NILLLCSLNTVLFFGGWLPPI), 288 to 308 (GFLWFLIKTFLFFFMFSWIWA), and 325 to 345 (VFLPMSLLFVFLISGYLMATG).

It belongs to the complex I subunit 1 family. As to quaternary structure, NDH-1 is composed of 14 different subunits. Subunits NuoA, H, J, K, L, M, N constitute the membrane sector of the complex.

The protein localises to the cell inner membrane. The enzyme catalyses a quinone + NADH + 5 H(+)(in) = a quinol + NAD(+) + 4 H(+)(out). Functionally, NDH-1 shuttles electrons from NADH, via FMN and iron-sulfur (Fe-S) centers, to quinones in the respiratory chain. The immediate electron acceptor for the enzyme in this species is believed to be ubiquinone. Couples the redox reaction to proton translocation (for every two electrons transferred, four hydrogen ions are translocated across the cytoplasmic membrane), and thus conserves the redox energy in a proton gradient. This subunit may bind ubiquinone. This chain is NADH-quinone oxidoreductase subunit H, found in Erythrobacter litoralis (strain HTCC2594).